The chain runs to 419 residues: DNA ligase (419 aa).

The tract at residues 1-120 (MLNQFPGQYS…ARQKRGAHTN (120 aa)) is NTD. The AD domain stretch occupies residues 121 to 317 (RGMIPPMLVK…NYHSAHLAKL (197 aa)). ATP-binding residues include Q149, K151, E203, and F232. K151 functions as the N6-AMP-lysine intermediate in the catalytic mechanism. An a divalent metal cation-binding site is contributed by E203. A divalent metal cation is bound at residue E291. The ATP site is built by I294 and K316. The segment at 318–419 (KPLLDAEFIL…REPINVLEII (102 aa)) is OB domain.

The protein belongs to the ATP-dependent DNA ligase family. It depends on a divalent metal cation as a cofactor.

The protein resides in the virion. It catalyses the reaction ATP + (deoxyribonucleotide)n-3'-hydroxyl + 5'-phospho-(deoxyribonucleotide)m = (deoxyribonucleotide)n+m + AMP + diphosphate.. Very low-fidelity DNA ligase that seals nicks in double-stranded DNA during DNA repair. Together with the viral repair DNA polymerase X, fills the single nucleotide gaps generated by the AP endonuclease. It is not essential for viral replication and recombination. Displays a very low adenylation activity towards DNA with 3'-dideoxy- or 3'-amino-terminated nicks compared to regular nick DNA. This chain is DNA ligase (LIG), found in Ornithodoros (relapsing fever ticks).